A 215-amino-acid chain; its full sequence is Probable glutathione S-transferase GSTF2 (215 aa).

The region spanning 2–83 (APMKLYGSTL…YVCRKNKPEL (82 aa)) is the GST N-terminal domain. Residues Ser12, 41–42 (HK), 54–55 (QV), and 67–68 (ES) each bind glutathione. The region spanning 88–215 (DLKESAMVDV…KVASLMKPPA (128 aa)) is the GST C-terminal domain.

It belongs to the GST superfamily. Phi family. As to expression, constitutively expressed in roots. Expressed in anthers, callus, panicles, sheaths and stems (at protein level).

It carries out the reaction RX + glutathione = an S-substituted glutathione + a halide anion + H(+). Functionally, conjugation of reduced glutathione to a wide number of exogenous and endogenous hydrophobic electrophiles. This chain is Probable glutathione S-transferase GSTF2 (GSTF2), found in Oryza sativa subsp. japonica (Rice).